A 337-amino-acid chain; its full sequence is tRNA N6-adenosine threonylcarbamoyltransferase (337 aa).

2 residues coordinate Fe cation: His-111 and His-115. Substrate contacts are provided by residues Leu-134 to Gly-138, Asp-167, Gly-180, and Asn-272. Fe cation is bound at residue Asp-300.

Belongs to the KAE1 / TsaD family. Requires Fe(2+) as cofactor.

The protein localises to the cytoplasm. It catalyses the reaction L-threonylcarbamoyladenylate + adenosine(37) in tRNA = N(6)-L-threonylcarbamoyladenosine(37) in tRNA + AMP + H(+). Required for the formation of a threonylcarbamoyl group on adenosine at position 37 (t(6)A37) in tRNAs that read codons beginning with adenine. Is involved in the transfer of the threonylcarbamoyl moiety of threonylcarbamoyl-AMP (TC-AMP) to the N6 group of A37, together with TsaE and TsaB. TsaD likely plays a direct catalytic role in this reaction. In Pectobacterium atrosepticum (strain SCRI 1043 / ATCC BAA-672) (Erwinia carotovora subsp. atroseptica), this protein is tRNA N6-adenosine threonylcarbamoyltransferase.